Reading from the N-terminus, the 624-residue chain is Chaperone protein HtpG (624 aa).

Residues 1-336 (MKGQETRGFQ…SSDLSLNVSR (336 aa)) are a; substrate-binding. Residues 337 to 552 (EILQDSTVTR…ADEMSTQMAK (216 aa)) are b. The interval 553-624 (LFAAAGQKVP…IRRMNQLLVS (72 aa)) is c.

Belongs to the heat shock protein 90 family. In terms of assembly, homodimer.

It localises to the cytoplasm. Its function is as follows. Molecular chaperone. Has ATPase activity. This Shigella dysenteriae serotype 1 (strain Sd197) protein is Chaperone protein HtpG.